Here is a 64-residue protein sequence, read N- to C-terminus: MAKNKGTRILITLECTECRTNINKRSAGVSRYLTQKNRRNNPQRMELKKYCPHCNKPTIHKEIK.

The protein belongs to the bacterial ribosomal protein bL33 family.

The protein localises to the plastid. It is found in the chloroplast. This chain is Large ribosomal subunit protein bL33c, found in Thalassiosira pseudonana (Marine diatom).